Reading from the N-terminus, the 255-residue chain is Cell division protein ZapD (255 aa).

It belongs to the ZapD family. As to quaternary structure, interacts with FtsZ.

Its subcellular location is the cytoplasm. Functionally, cell division factor that enhances FtsZ-ring assembly. Directly interacts with FtsZ and promotes bundling of FtsZ protofilaments, with a reduction in FtsZ GTPase activity. This is Cell division protein ZapD from Methylococcus capsulatus (strain ATCC 33009 / NCIMB 11132 / Bath).